The following is a 328-amino-acid chain: BURP domain-containing protein 11 (328 aa).

Residues 74–318 form the BURP domain; sequence FFFRDALRPG…TKLSIVWVPR (245 aa).

In terms of tissue distribution, expressed in roots.

This chain is BURP domain-containing protein 11 (BURP11), found in Oryza sativa subsp. japonica (Rice).